The sequence spans 176 residues: Large ribosomal subunit protein bL17 (176 aa).

The tract at residues 124-176 (AAPKAARQDRSKRVKGSRKTEASAAKAAPAAQAAPELPAESDAPAAEAAPTEE) is disordered. Low complexity predominate over residues 145–176 (ASAAKAAPAAQAAPELPAESDAPAAEAAPTEE).

This sequence belongs to the bacterial ribosomal protein bL17 family. Part of the 50S ribosomal subunit. Contacts protein L32.

The polypeptide is Large ribosomal subunit protein bL17 (Chlorobium phaeovibrioides (strain DSM 265 / 1930) (Prosthecochloris vibrioformis (strain DSM 265))).